A 109-amino-acid polypeptide reads, in one-letter code: Large ribosomal subunit protein uL22 (109 aa).

Belongs to the universal ribosomal protein uL22 family. Part of the 50S ribosomal subunit.

In terms of biological role, this protein binds specifically to 23S rRNA; its binding is stimulated by other ribosomal proteins, e.g. L4, L17, and L20. It is important during the early stages of 50S assembly. It makes multiple contacts with different domains of the 23S rRNA in the assembled 50S subunit and ribosome. Its function is as follows. The globular domain of the protein is located near the polypeptide exit tunnel on the outside of the subunit, while an extended beta-hairpin is found that lines the wall of the exit tunnel in the center of the 70S ribosome. The chain is Large ribosomal subunit protein uL22 from Azoarcus sp. (strain BH72).